We begin with the raw amino-acid sequence, 349 residues long: Isopentenyl-diphosphate delta-isomerase (349 aa).

6–7 (RK) contributes to the substrate binding site. FMN contacts are provided by residues 62-64 (AMT), S93, and N122. Q152 is a binding site for substrate. Position 153 (E153) interacts with Mg(2+). FMN contacts are provided by residues K184, T214, 258-259 (GG), and 280-281 (AG).

It belongs to the IPP isomerase type 2 family. As to quaternary structure, homooctamer. Dimer of tetramers. It depends on FMN as a cofactor. NADPH serves as cofactor. Mg(2+) is required as a cofactor.

The protein resides in the cytoplasm. It carries out the reaction isopentenyl diphosphate = dimethylallyl diphosphate. In terms of biological role, involved in the biosynthesis of isoprenoids. Catalyzes the 1,3-allylic rearrangement of the homoallylic substrate isopentenyl (IPP) to its allylic isomer, dimethylallyl diphosphate (DMAPP). The sequence is that of Isopentenyl-diphosphate delta-isomerase from Bacillus anthracis (strain A0248).